We begin with the raw amino-acid sequence, 288 residues long: ATP synthase gamma chain (288 aa).

The protein belongs to the ATPase gamma chain family. In terms of assembly, F-type ATPases have 2 components, CF(1) - the catalytic core - and CF(0) - the membrane proton channel. CF(1) has five subunits: alpha(3), beta(3), gamma(1), delta(1), epsilon(1). CF(0) has three main subunits: a, b and c.

It localises to the cell inner membrane. Functionally, produces ATP from ADP in the presence of a proton gradient across the membrane. The gamma chain is believed to be important in regulating ATPase activity and the flow of protons through the CF(0) complex. The chain is ATP synthase gamma chain from Stutzerimonas stutzeri (strain A1501) (Pseudomonas stutzeri).